The following is a 588-amino-acid chain: Pre-mRNA 3'-end-processing factor FIP1 (588 aa).

Over residues 1–10 (MSAGEVERLV) the composition is skewed to basic and acidic residues. Disordered stretches follow at residues 1–81 (MSAG…EDDV), 223–291 (QGRT…ESPD), and 334–588 (VDNN…TPAE). The interval 1 to 96 (MSAGEVERLV…DIKTGAPQYG (96 aa)) is sufficient for interaction with PAPOLA. Positions 1–341 (MSAGEVERLV…TAVDNNFSKP (341 aa)) are necessary for stimulating PAPOLA activity. 2 stretches are compositionally biased toward acidic residues: residues 19–40 (GDEE…EEEN) and 66–80 (TEDD…DEDD). 3 positions are modified to phosphoserine: Ser70, Ser72, and Ser74. The sufficient for interaction with CPSF4 stretch occupies residues 122–228 (KGVDLDAPGS…FKVQQGRTGN (107 aa)). The segment covering 259–270 (STSSQSQTSTAS) has biased composition (low complexity). The segment covering 280-291 (WQDRYGRAESPD) has biased composition (basic and acidic residues). Phosphoserine is present on Ser289. Over residues 340–398 (KPPPFFPPGAPPTHLPPPPFLPPPPTVSTAPPLIPPPGIPITVPPPGFPPPPGAPPPSL) the composition is skewed to pro residues. Tyr420 carries the post-translational modification Phosphotyrosine. The tract at residues 437–588 (SLVDTSKQWD…QESTEATPAE (152 aa)) is sufficient for interaction with CPSF1 and CSTF3. Basic and acidic residues predominate over residues 448–486 (YARREKDRDRERDRDRERDRDRDRERERTRERERERDHS). The arg/Asp/Glu-rich domain stretch occupies residues 451 to 484 (REKDRDRERDRDRERDRDRDRERERTRERERERD). Ser486 carries the post-translational modification Phosphoserine. Residue Thr488 is modified to Phosphothreonine. Phosphoserine occurs at positions 490 and 494. The span at 495–522 (DEERYRYREYAERGYERHRASREKEERH) shows a compositional bias: basic and acidic residues. Basic residues predominate over residues 536-545 (KSSRSNSRRR). Ser548 is subject to Phosphoserine. Over residues 554 to 564 (HRRHKHKKSKR) the composition is skewed to basic residues.

This sequence belongs to the FIP1 family. In terms of assembly, component of the cleavage and polyadenylation specificity factor (CPSF) complex, composed of CPSF1, CPSF2, CPSF3, CPSF4 and FIP1L1. Found in a complex with CPSF1, FIP1L1 and PAPOLA. Interacts with CPSF1, CPSF4, CSTF2 and CSTF3. Interacts with AHCYL1 (when phosphorylated); the interaction is direct and associates AHCYL1 with the CPSF complex and RNA. Interacts with PAPOLA; the interaction seems to be increased by the interaction with AHCYL1. Interacts with NUDT21/CPSF5; this interaction occurs in a RNA sequence-specific manner. Interacts (preferentially via unphosphorylated form and Arg/Glu/Asp-rich domain) with CPSF6 (via Arg/Ser-rich domain); this interaction mediates, at least in part, the interaction between the CFIm and CPSF complexes and may be inhibited by CPSF6 hyper-phosphorylation. Interacts (preferentially via unphosphorylated form and Arg/Asp/Glu-rich domain) with CPSF7 (via Arg/Ser-rich domain); this interaction mediates, at least in part, the interaction between the CFIm and CPSF complexes and may be inhibited by CPSF7 hyper-phosphorylation.

The protein localises to the nucleus. Its function is as follows. Component of the cleavage and polyadenylation specificity factor (CPSF) complex that plays a key role in pre-mRNA 3'-end formation, recognizing the AAUAAA signal sequence and interacting with poly(A) polymerase and other factors to bring about cleavage and poly(A) addition. FIP1L1 contributes to poly(A) site recognition and stimulates poly(A) addition. Binds to U-rich RNA sequence elements surrounding the poly(A) site. May act to tether poly(A) polymerase to the CPSF complex. The polypeptide is Pre-mRNA 3'-end-processing factor FIP1 (FIP1L1) (Pongo abelii (Sumatran orangutan)).